A 310-amino-acid chain; its full sequence is Choline trimethylamine-lyase activating enzyme (310 aa).

One can recognise a Radical SAM core domain in the interval 17 to 304; the sequence is YDGPGVRTLV…EACIRKYDFP (288 aa). C31, C35, C38, C57, C60, C63, and C99 together coordinate [4Fe-4S] cluster. Position 37 to 39 (37 to 39) interacts with S-adenosyl-L-methionine; it reads WCS. 2 consecutive 4Fe-4S ferredoxin-type domains span residues 48–77 and 79–109; these read YQVL…ISAS and LRHG…VVGE. S-adenosyl-L-methionine is bound by residues G139, 188 to 190, and H264; that span reads DVK.

This sequence belongs to the organic radical-activating enzymes family. Monomer. It depends on [4Fe-4S] cluster as a cofactor.

It catalyses the reaction glycyl-[protein] + reduced [flavodoxin] + S-adenosyl-L-methionine = glycin-2-yl radical-[protein] + semiquinone [flavodoxin] + 5'-deoxyadenosine + L-methionine + H(+). The protein operates within amine and polyamine metabolism; choline degradation. In terms of biological role, catalyzes activation of the choline trimethylamine-lyase CutC under anaerobic conditions by generation of an organic free radical on a glycine residue, via a homolytic cleavage of S-adenosyl-L-methionine (SAM). Is involved in the anaerobic choline utilization pathway that allows D.alaskensis to grow on choline as a source of carbon and energy. The protein is Choline trimethylamine-lyase activating enzyme of Oleidesulfovibrio alaskensis (strain ATCC BAA-1058 / DSM 17464 / G20) (Desulfovibrio alaskensis).